Reading from the N-terminus, the 785-residue chain is uncharacterized protein (785 aa).

Positions 1-93 (MSWVMVSPEL…GGAYAAAEAA (93 aa)) constitute a PE domain.

The protein belongs to the mycobacterial PE family. PGRS subfamily.

This is an uncharacterized protein from Mycobacterium tuberculosis (strain CDC 1551 / Oshkosh).